Here is a 124-residue protein sequence, read N- to C-terminus: MPTIQQLIRSARQDTEKQTKSPALKSCPQRRGVCTRVYTTTPKKPNSALRKVARVRLTSGFEVTAYIPGIGHNLQEHSVVMIRGGRVKDLPGVRYHIIRGTLDTAGVKDRKQSRSKYGAKKPKA.

Positions 8–30 (IRSARQDTEKQTKSPALKSCPQR) are disordered. Asp89 is modified (3-methylthioaspartic acid). The tract at residues 103 to 124 (DTAGVKDRKQSRSKYGAKKPKA) is disordered. Over residues 113–124 (SRSKYGAKKPKA) the composition is skewed to basic residues.

The protein belongs to the universal ribosomal protein uS12 family. Part of the 30S ribosomal subunit. Contacts proteins S8 and S17. May interact with IF1 in the 30S initiation complex.

With S4 and S5 plays an important role in translational accuracy. In terms of biological role, interacts with and stabilizes bases of the 16S rRNA that are involved in tRNA selection in the A site and with the mRNA backbone. Located at the interface of the 30S and 50S subunits, it traverses the body of the 30S subunit contacting proteins on the other side and probably holding the rRNA structure together. The combined cluster of proteins S8, S12 and S17 appears to hold together the shoulder and platform of the 30S subunit. This Trichodesmium erythraeum (strain IMS101) protein is Small ribosomal subunit protein uS12.